The following is a 39-amino-acid chain: TIINVKCTSPKQCLLPCKQIYGPHAGAKCMNGKCHCSKI.

3 disulfide bridges follow: Cys7-Cys29, Cys13-Cys34, and Cys17-Cys36. Isoleucine amide is present on Ile39.

It belongs to the short scorpion toxin superfamily. Potassium channel inhibitor family. Alpha-KTx 02 subfamily. As to expression, expressed by the venom gland.

It localises to the secreted. Blocks human voltage-gated potassium channels Kv1.1/KCNA1 (IC(50)=4.8 nM) and Kv1.2/KCNA2 (IC(50)=2.9 nM). This Centruroides tecomanus (Scorpion) protein is Potassium channel toxin alpha-KTx 2.17.